The chain runs to 427 residues: Phosphoglucosamine mutase (427 aa).

The active-site Phosphoserine intermediate is serine 94. Mg(2+)-binding residues include serine 94, aspartate 228, aspartate 230, and aspartate 232. Serine 94 is modified (phosphoserine).

Belongs to the phosphohexose mutase family. Mg(2+) is required as a cofactor. Post-translationally, activated by phosphorylation.

It catalyses the reaction alpha-D-glucosamine 1-phosphate = D-glucosamine 6-phosphate. Functionally, catalyzes the conversion of glucosamine-6-phosphate to glucosamine-1-phosphate. The chain is Phosphoglucosamine mutase from Thermotoga sp. (strain RQ2).